Reading from the N-terminus, the 349-residue chain is Histidinol-phosphate aminotransferase (349 aa).

An N6-(pyridoxal phosphate)lysine modification is found at lysine 206.

Belongs to the class-II pyridoxal-phosphate-dependent aminotransferase family. Histidinol-phosphate aminotransferase subfamily. As to quaternary structure, homodimer. Pyridoxal 5'-phosphate serves as cofactor.

It catalyses the reaction L-histidinol phosphate + 2-oxoglutarate = 3-(imidazol-4-yl)-2-oxopropyl phosphate + L-glutamate. It participates in amino-acid biosynthesis; L-histidine biosynthesis; L-histidine from 5-phospho-alpha-D-ribose 1-diphosphate: step 7/9. The chain is Histidinol-phosphate aminotransferase from Hydrogenobaculum sp. (strain Y04AAS1).